A 125-amino-acid chain; its full sequence is MLTKREKKELGIGKDQGKAILRYARISPRKVRIVLDLIKGKDIDEAYAILRYTPKAASSILFKLLKSAEANATNNNGLNRDNLYVAEAYADQGPTLKRILPRARGSADRIRKRTSHITLVVKERS.

It belongs to the universal ribosomal protein uL22 family. Part of the 50S ribosomal subunit.

This protein binds specifically to 23S rRNA; its binding is stimulated by other ribosomal proteins, e.g. L4, L17, and L20. It is important during the early stages of 50S assembly. It makes multiple contacts with different domains of the 23S rRNA in the assembled 50S subunit and ribosome. Its function is as follows. The globular domain of the protein is located near the polypeptide exit tunnel on the outside of the subunit, while an extended beta-hairpin is found that lines the wall of the exit tunnel in the center of the 70S ribosome. This chain is Large ribosomal subunit protein uL22, found in Acetivibrio thermocellus (strain ATCC 27405 / DSM 1237 / JCM 9322 / NBRC 103400 / NCIMB 10682 / NRRL B-4536 / VPI 7372) (Clostridium thermocellum).